Consider the following 1081-residue polypeptide: Serine/threonine-protein kinase PKH2 (1081 aa).

The residue at position 138 (S138) is a Phosphoserine. Residues 179-443 (FKFGSVIGDG…ISQIKEHHFF (265 aa)) form the Protein kinase domain. Residues 189–191 (AYS) and K208 contribute to the ATP site. Residues 210–255 (LNKEYLIRQKKVKYVSIEKTALQKLNNSPSVVRLFSTFQDESSLYF) are PIF-pocket. Residues 258–260 (EYA) and D264 contribute to the ATP site. The active-site Proton acceptor is D303. ATP contacts are provided by E307 and D321. A compositionally biased stretch (polar residues) spans 494–526 (HLVTQRSASSPSVEETTHSTLYNNNTHASTESE). 3 disordered regions span residues 494–652 (HLVT…TYQM), 805–833 (NRSGEGYKCNQNSSPMKDDDKSESNNKGS), and 970–1017 (IERR…INSA). Basic and acidic residues predominate over residues 527–538 (ISIKKRPTDERT). Low complexity-rich tracts occupy residues 564–575 (AASAALAASAAL) and 582–602 (SYPTSSSKSSRSSSPATTSRP). Phosphoserine is present on S619. Residues 632–645 (PMPPYTPPMSPPMT) are compositionally biased toward pro residues. 2 stretches are compositionally biased toward polar residues: residues 805 to 819 (NRSGEGYKCNQNSSP) and 998 to 1017 (HSQSPSISKHNSFSESINSA). Phosphoserine is present on S1009.

This sequence belongs to the protein kinase superfamily. AGC Ser/Thr protein kinase family. PDPK1 subfamily.

Its subcellular location is the nucleus. The protein localises to the cytoplasm. It is found in the cell cortex. The catalysed reaction is L-seryl-[protein] + ATP = O-phospho-L-seryl-[protein] + ADP + H(+). The enzyme catalyses L-threonyl-[protein] + ATP = O-phospho-L-threonyl-[protein] + ADP + H(+). Its activity is regulated as follows. Sphingoid base activates kinase activity. In terms of biological role, serine/threonine-protein kinase which is part sphingolipid-mediated signaling pathway that is required for the internalization step of endocytosis by regulating eisosome assembly and organization, and modulating the organization of the plasma membrane. Phosphorylates and activates PKC1. Activates YPK1 and YPK2, 2 components of signaling cascade required for maintenance of cell wall integrity. Required for stress-induced P-body assembly and regulates global mRNA decay at the deadenylation step. The protein is Serine/threonine-protein kinase PKH2 (PKH2) of Saccharomyces cerevisiae (strain ATCC 204508 / S288c) (Baker's yeast).